We begin with the raw amino-acid sequence, 334 residues long: Aspartate carbamoyltransferase catalytic subunit (334 aa).

2 residues coordinate carbamoyl phosphate: R71 and T72. An L-aspartate-binding site is contributed by K99. Residues R121, H151, and Q154 each contribute to the carbamoyl phosphate site. Residues R184 and R239 each coordinate L-aspartate. Residues G280 and P281 each contribute to the carbamoyl phosphate site.

It belongs to the aspartate/ornithine carbamoyltransferase superfamily. ATCase family. In terms of assembly, heterododecamer (2C3:3R2) of six catalytic PyrB chains organized as two trimers (C3), and six regulatory PyrI chains organized as three dimers (R2).

The catalysed reaction is carbamoyl phosphate + L-aspartate = N-carbamoyl-L-aspartate + phosphate + H(+). The protein operates within pyrimidine metabolism; UMP biosynthesis via de novo pathway; (S)-dihydroorotate from bicarbonate: step 2/3. In terms of biological role, catalyzes the condensation of carbamoyl phosphate and aspartate to form carbamoyl aspartate and inorganic phosphate, the committed step in the de novo pyrimidine nucleotide biosynthesis pathway. This is Aspartate carbamoyltransferase catalytic subunit from Pseudomonas putida (Arthrobacter siderocapsulatus).